The sequence spans 69 residues: DNA-directed RNA polymerase subunit omega (69 aa).

The protein belongs to the RNA polymerase subunit omega family. As to quaternary structure, the RNAP catalytic core consists of 2 alpha, 1 beta, 1 beta' and 1 omega subunit. When a sigma factor is associated with the core the holoenzyme is formed, which can initiate transcription.

It catalyses the reaction RNA(n) + a ribonucleoside 5'-triphosphate = RNA(n+1) + diphosphate. Promotes RNA polymerase assembly. Latches the N- and C-terminal regions of the beta' subunit thereby facilitating its interaction with the beta and alpha subunits. The polypeptide is DNA-directed RNA polymerase subunit omega (Pediococcus pentosaceus (strain ATCC 25745 / CCUG 21536 / LMG 10740 / 183-1w)).